The primary structure comprises 275 residues: 3-methyl-2-oxobutanoate hydroxymethyltransferase (275 aa).

Mg(2+)-binding residues include aspartate 44 and aspartate 83. 3-methyl-2-oxobutanoate contacts are provided by residues 44–45, aspartate 83, and lysine 113; that span reads DS. A Mg(2+)-binding site is contributed by glutamate 115. Catalysis depends on glutamate 182, which acts as the Proton acceptor.

This sequence belongs to the PanB family. Homodecamer; pentamer of dimers. Requires Mg(2+) as cofactor.

Its subcellular location is the cytoplasm. The enzyme catalyses 3-methyl-2-oxobutanoate + (6R)-5,10-methylene-5,6,7,8-tetrahydrofolate + H2O = 2-dehydropantoate + (6S)-5,6,7,8-tetrahydrofolate. It functions in the pathway cofactor biosynthesis; (R)-pantothenate biosynthesis; (R)-pantoate from 3-methyl-2-oxobutanoate: step 1/2. Its function is as follows. Catalyzes the reversible reaction in which hydroxymethyl group from 5,10-methylenetetrahydrofolate is transferred onto alpha-ketoisovalerate to form ketopantoate. This is 3-methyl-2-oxobutanoate hydroxymethyltransferase from Clostridium botulinum (strain 657 / Type Ba4).